Here is a 359-residue protein sequence, read N- to C-terminus: MKVLAAMSGGVDSAVAAARAVDMGHDVVGVHLALSRSASGKRGCCTPRDAQDAAQAAQTIGIPFYVWDFSEEFQEKVIDNFISEYSAGRTPNPCLRCNEHIKFSSLLRRALALGFDAVCTGHYARVFLDEDGTYQLHRASSWAKDQSYVLAVLQQAQLKHCYFPLGATPSKKLVRQEADERGLKVSKKPDSHDVCFIPSSNTGAWLSQRIGRRDGDIIDDLGQRVGSHTGAFAYTVGQRKGLRLSSPAWDGKPRYVLDIEPISNTVVVGPRESLRVDELSGAFTTTGWCFTSRPIECSVQVRAHSDPVSAIAFIRDDVLVVRPDEPVFAVAKGQSAAIYRGTRVLGQLMIDNTKKYASS.

Residues 6–13 (AMSGGVDS) and leucine 32 each bind ATP. Cysteine 97 functions as the Nucleophile in the catalytic mechanism. A disulfide bridge links cysteine 97 with cysteine 195. Residue glycine 121 coordinates ATP. The tract at residues 144–146 (KDQ) is interaction with tRNA. Cysteine 195 (cysteine persulfide intermediate) is an active-site residue.

It belongs to the MnmA/TRMU family.

It localises to the cytoplasm. The catalysed reaction is S-sulfanyl-L-cysteinyl-[protein] + uridine(34) in tRNA + AH2 + ATP = 2-thiouridine(34) in tRNA + L-cysteinyl-[protein] + A + AMP + diphosphate + H(+). Functionally, catalyzes the 2-thiolation of uridine at the wobble position (U34) of tRNA, leading to the formation of s(2)U34. This chain is tRNA-specific 2-thiouridylase MnmA, found in Tropheryma whipplei (strain TW08/27) (Whipple's bacillus).